We begin with the raw amino-acid sequence, 320 residues long: Delta(7)-sterol 5(6)-desaturase erg3C (320 aa).

Helical transmembrane passes span 43-63, 91-111, and 127-147; these read VISILVLTQLGATSLYLFFSA, SSLSAIPFINILTLPWFLAEV, and PWLVVSSILYMAFNDIGIYWI. Residues 134 to 283 enclose the Fatty acid hydroxylase domain; that stretch reads ILYMAFNDIG…FTWADAYFGS (150 aa). A Histidine box-1 motif is present at residues 148–152; the sequence is HRLEH. A Histidine box-2 motif is present at residues 161 to 165; it reads HKPHH. Residues 224-244 form a helical membrane-spanning segment; it reads YMVLFAAVQIWTILIHDGDMI. The Histidine box-3 signature appears at 259-263; that stretch reads HTLHH.

Belongs to the sterol desaturase family. The cofactor is Fe cation.

It is found in the endoplasmic reticulum membrane. Its function is as follows. Delta(7)-sterol 5(6)-desaturase; part of the third module of ergosterol biosynthesis pathway that includes the late steps of the pathway. Erg3C is a minor delta(7)-sterol 5(6)-desaturase within the ergosterol pathway, erg3B being the major one. The third module or late pathway involves the ergosterol synthesis itself through consecutive reactions that mainly occur in the endoplasmic reticulum (ER) membrane. Firstly, the squalene synthase erg9 catalyzes the condensation of 2 farnesyl pyrophosphate moieties to form squalene, which is the precursor of all steroids. Squalene synthase is crucial for balancing the incorporation of farnesyl diphosphate (FPP) into sterol and nonsterol isoprene synthesis. Secondly, squalene is converted into lanosterol by the consecutive action of the squalene epoxidase erg1 and the lanosterol synthase erg7. Then, the delta(24)-sterol C-methyltransferase erg6 methylates lanosterol at C-24 to produce eburicol. Eburicol is the substrate of the sterol 14-alpha demethylase encoded by cyp51A and cyp51B, to yield 4,4,24-trimethyl ergosta-8,14,24(28)-trienol. The C-14 reductase erg24 then reduces the C14=C15 double bond which leads to 4,4-dimethylfecosterol. A sequence of further demethylations at C-4, involving the C-4 demethylation complex containing the C-4 methylsterol oxidases erg25A or erg25B, the sterol-4-alpha-carboxylate 3-dehydrogenase erg26 and the 3-keto-steroid reductase erg27, leads to the production of fecosterol via 4-methylfecosterol. The C-8 sterol isomerase erg2 then catalyzes the reaction which results in unsaturation at C-7 in the B ring of sterols and thus converts fecosterol to episterol. The sterol-C5-desaturase erg3B then catalyzes the introduction of a C-5 double bond in the B ring to produce 5-dehydroepisterol. The 2 other sterol-C5-desaturases, erg3A and erg3C, seem to be less important in ergosterol biosynthesis. The C-22 sterol desaturase erg5 further converts 5-dehydroepisterol into ergosta-5,7,22,24(28)-tetraen-3beta-ol by forming the C-22(23) double bond in the sterol side chain. Finally, ergosta-5,7,22,24(28)-tetraen-3beta-ol is substrate of the C-24(28) sterol reductases erg4A and erg4B to produce ergosterol. Possible alternative sterol biosynthetic pathways might exist from fecosterol to ergosterol, depending on the activities of the erg3 isoforms. The sequence is that of Delta(7)-sterol 5(6)-desaturase erg3C from Aspergillus fumigatus (strain ATCC MYA-4609 / CBS 101355 / FGSC A1100 / Af293) (Neosartorya fumigata).